The sequence spans 183 residues: Threonylcarbamoyl-AMP synthase (183 aa).

Residues 1–183 enclose the YrdC-like domain; the sequence is MNREQIAEAL…LRTNQLFRQG (183 aa).

This sequence belongs to the SUA5 family. TsaC subfamily.

Its subcellular location is the cytoplasm. The catalysed reaction is L-threonine + hydrogencarbonate + ATP = L-threonylcarbamoyladenylate + diphosphate + H2O. Functionally, required for the formation of a threonylcarbamoyl group on adenosine at position 37 (t(6)A37) in tRNAs that read codons beginning with adenine. Catalyzes the conversion of L-threonine, HCO(3)(-)/CO(2) and ATP to give threonylcarbamoyl-AMP (TC-AMP) as the acyladenylate intermediate, with the release of diphosphate. The chain is Threonylcarbamoyl-AMP synthase from Haemophilus influenzae (strain 86-028NP).